The following is a 3054-amino-acid chain: MALIFGTVNANILKEVFGGARMACVTSAHMAGANGSILKKAEETSRAIMHKPVIFGEDYITEADLPYTPLHLEVDAEMERMYYLGRRALTHGKRRKVSVNNKRNRRRKVAKTYVGRDSIVEKIVVPHTERKVDTTAAVEDICNEATTQLVHNSMPKRKKQKNFLPATSLSNVYAQTWSIVRKRHMQVEIISKKSVRARVKRFEGSVQLFASVRHMYGERKRVDLRIDNWQQETLLDLAKRFKNERVDQSKLTFGSSGLVLRQGSYGPAHWYRHGMFIVRGRSDGMLVDARAKVTFAVCHSMTHYSDKSISEAFFIPYSKKFLELRPDGISHECTRGVSVERCGEVAAILTQALSPCGKITCKRCMVETPDIVEGESGESVTNQGKLLAMLKEQYPDFPMAEKLLTRFLQQKSLVNTNLTACVSVKQLIGDRKQAPFTHVLAVSEILFKGNKLTGADLEEASTHMLEIARFLNNRTENMRIGHLGSFRNKISSKAHVNNALMCDNQLDQNGNFIWGLRGAHAKRFLKGFFTEIDPNEGYDKYVIRKHIRGSRKLAIGNLIMSTDFQTLRQQIQGETIERKEIGNHCISMRNGNYVYPCCCVTLEDGKAQYSDLKHPTKRHLVIGNSGDSKYLDLPVLNEEKMYIANEGYCYMNIFFALLVNVKEEDAKDFTKFIRDTIVPKLGAWPTMQDVATACYLLSILYPDVLRAELPRILVDHDNKTMHVLDSYGSRTTGYHMLKMNTTSQLIEFVHSGLESEMKTYNVGGMNRDVVTQGAIEMLIKSIYKPHLMKQLLEEEPYIIVLAIVSPSILIAMYNSGTFEQALQMWLPNTMRLANLAAILSALAQKLTLADLFVQQRNLINEYAQVILDNLIDGVRVNHSLSLAMEIVTIKLATQEMDMALREGGYAVTSEKVHEMLEKNYVKALKDAWDELTWLEKFSAIRHSRKLLKFGRKPLIMKNTVDCGGHIDLSVKSLFKFHLELLKGTISRAVNGGARKVRVAKNAMTKGVFLKIYSMLPDVYKFITVSSVLSLLLTFLFQIDCMIRAHREAKVAAQLQKESEWDNIINRTFQYSKLENPIGYRSTAEERLQSEHPEAFEYYKFCIGKEDLVEQAKQPEIAYFEKIIAFITLVLMAFDAERSDGVFKILNKFKGILSSTEREIIYTQSLDDYVTTFDDNMTINLELNMDELHKTSLPGVTFKQWWNNQISRGNVKPHYRTEGHFMEFTRDTAASVASEISHSPARDFLVRGAVGSGKSTGLPYHLSKRGRVLMLEPTRPLTDNMHKQLRSEPFNCFPTLRMRGKSTFGSSPITVMTSGFALHHFARNIAEVKTYDFVIIDECHVNDASAIAFRNLLFEHEFEGKVLKVSATPPGREVEFTTQFPVKLKIEEALSFQEFVSLQGTGANADVISCGDNILVYVASYNDVDSLGKLLVQKGYKVSKIDGRTMKSGGTEIITEGTSVKKHFIVATNIIENGVTIDIDVVVDFGTKVVPVLDVDNRAVQYNKTVVSYGERIQKLGRVGRHKEGVALRIGQTNKTLVEIPEMVATEAAFLCFMYNLPVTTQSVSTTLLENATLLQARTMAQFELSYFYTINFVRFDGSMHPVIHDKLKRFKLHTCETFLNKLAIPNKGLSSWLTSGEYKRLGYIAEDAGIRIPFVCKEIPDSLHEEIWHIVVAHKGDSGIGRLTSVQAAKVVYTLQTDVHSIARTLACINRRIADEQMKQSHFEAATGRAFSFTNYSIQSIFDTLKANYATKHTKENIAVLQQAKDQLLEFSNLAKDQDVTGIIQDFNHLETIYLQSDSEVAKHLKLKSHWNKSQITRDIIIALSVLIGGGWMLATYFKDKFNEPVYFQGKKNQKHKLKMREARGARGQYEVAAEPEALEHYFGSAYNNKGKRKGTTRGMGAKSRKFINMYGFDPTDFSYIRFVDPLTGHTIDESTNAPIDLVQHEFGKVRTRMLIDDEIEPQSLSTHTTIHAYLVNSGTKKVLKVDLTPHSSLRASEKSTAIMGFPERENELRQTGMAVPVAYDQLPPKNEDLTFEGESLFKGPRDYNPISSTICHLTNESDGHTTSLYGIGFGPFIITNKHLFRRNNGTLLVQSLHGVFKVKNTTTLQQHLIDGRDMIIIRMPKDFPPFPQKLKFREPQREERICLVTTNFQTKSMSSMVSDTSCTFPSSDGIFWKHWIQTKDGQCGSPLVSTRDGFIVGIHSASNFTNTNNYFTSVPKNFMELLTNQEAQQWVSGWRLNADSVLWGGHKVFMSKPEEPFQPVKEATQLMNELVYSQGEKRKWVVEALSGNLRPVAECPSQLVTKHVVKGKCPLFELYLQLNPEKEAYFKPMMGAYKPSRLNREAFLKDILKYASEIEIGNVDCDLLELAISMLVTKLKALGFPTVNYITDPEEIFSALNMKAAMGALYKGKKKEALSELTLDEQEAMLKASCLRLYTGKLGIWNGSLKAELRPIEKVENNKTRTFTAAPIDTLLAGKVCVDDFNNQFYDLNIKAPWTVGMTKFYQGWNELMEALPSGWVYCDADGSQFDSSLTPFLINAVLKVRLAFMEEWDIGEQMLRNLYTEIVYTPILTPDGTIIKKHKGNNSGQPSTVVDNTLMVIIAMLYTCEKCGINKEEIVYYVNGDDLLIAIHPDKAERLSRFKESFGELGLKYEFDCTTRDKTQLWFMSHRALERDGMYIPKLEEERIVSILEWDRSKEPSHRLEAICASMIEAWGYDKLVEEIRNFYAWVLEQAPYSQLAEEGKAPYLAETALKFLYTSQHGTNSEIEEYLKVLYDYDIPTTENLYFQSGTVDAGADAGKKKDQKDDKVAEQASKDRDVNAGTSGTFSVPRINAMATKLQYPRMRGEVVVNLNHLLGYKPQQIDLSNARATHEQFAAWHQAVMTAYGVNEEQMKILLNGFMVWCIENGTSPNLNGTWVMMDGEDQVSYPLKPMVENAQPTLRQIMTHFSDLAEAYIEMRNRERPYMPRYGLQRNITDMSLSRYAFDFYELTSKTPVRAREAHMQMKAAAVRNSGTRLFGLDGNVGTAEEDTERHTAHDVNRNMHTLLGVRQ.

The 142-residue stretch at 163-304 folds into the Peptidase S30 domain; that stretch reads FLPATSLSNV…FAVCHSMTHY (142 aa). Residues His-214, Asp-223, and Ser-256 each act as for P1 proteinase activity in the active site. An Involved in interaction with stylet and aphid transmission motif is present at residues 358–361; it reads KITC. Positions 615–617 match the Involved in virions binding and aphid transmission motif; the sequence is PTK. In terms of domain architecture, Peptidase C6 spans 641–763; it reads MYIANEGYCY…ESEMKTYNVG (123 aa). Catalysis depends on for helper component proteinase activity residues Cys-649 and His-722. The 153-residue stretch at 1234–1386 folds into the Helicase ATP-binding domain; the sequence is EISHSPARDF…TQFPVKLKIE (153 aa). 1247-1254 serves as a coordination point for ATP; it reads GAVGSGKS. Positions 1336 to 1339 match the DECH box motif; the sequence is DECH. One can recognise a Helicase C-terminal domain in the interval 1401 to 1564; that stretch reads GANADVISCG…NLPVTTQSVS (164 aa). The Nuclear localization signal signature appears at 1889-1896; sequence NKGKRKGT. Position 1911 is an O-(5'-phospho-RNA)-tyrosine (Tyr-1911). The Peptidase C4 domain occupies 2038–2255; that stretch reads GESLFKGPRD…VLWGGHKVFM (218 aa). Residues His-2083, Asp-2118, and Cys-2188 each act as for nuclear inclusion protein A activity in the active site. The region spanning 2521-2641 is the RdRp catalytic domain; it reads WVYCDADGSQ…AIHPDKAERL (121 aa). The disordered stretch occupies residues 2798–2827; that stretch reads GADAGKKKDQKDDKVAEQASKDRDVNAGTS. Over residues 2801-2822 the composition is skewed to basic and acidic residues; sequence AGKKKDQKDDKVAEQASKDRDV. Thr-3038 is subject to Phosphothreonine.

The protein belongs to the potyviridae genome polyprotein family. As to quaternary structure, interacts with host eIF4E protein (via cap-binding region); this interaction mediates the translation of the VPg-viral RNA conjugates. Part of a complex that comprises VPg, RNA, host EIF4E and EIF4G; this interaction mediates the translation of the VPg-viral RNA conjugates. Interaction is possible in susceptible hosts but impaired in resistant plants: the VPg of strain HAT interacts with tomato eIF4E1 and eIF4E2 as well as with Capsicum annuum eIF4E1 susceptible alleles pvr2(+), pvr2(3) and pvr2(9) but not with the resistant allele pvr2(2), the VPg of strain CAA10 interacts with C.annuum eIF4E1 susceptible alleles pvr2(+), pvr2(2), pvr2(3) and pvr2(9), the VPg of strain NW interacts at least with C.annuum eIF4E1. Homodimer; disulfide-linked. VPg is uridylylated by the polymerase and is covalently attached to the 5'-end of the genomic RNA. This uridylylated form acts as a nucleotide-peptide primer for the polymerase. Post-translationally, potyviral RNA is expressed as two polyproteins which undergo post-translational proteolytic processing. Genome polyprotein is processed by NIa-pro, P1 and HC-pro proteinases resulting in the production of at least ten individual proteins. P3N-PIPO polyprotein is cleaved by P1 and HC-pro proteinases resulting in the production of three individual proteins. The P1 proteinase and the HC-pro cleave only their respective C-termini autocatalytically. 6K1 is essential for proper proteolytic separation of P3 from CI.

It localises to the host cytoplasmic vesicle. The protein resides in the host nucleus. Its subcellular location is the virion. It catalyses the reaction RNA(n) + a ribonucleoside 5'-triphosphate = RNA(n+1) + diphosphate. It carries out the reaction Hydrolyzes glutaminyl bonds, and activity is further restricted by preferences for the amino acids in P6 - P1' that vary with the species of potyvirus, e.g. Glu-Xaa-Xaa-Tyr-Xaa-Gln-|-(Ser or Gly) for the enzyme from tobacco etch virus. The natural substrate is the viral polyprotein, but other proteins and oligopeptides containing the appropriate consensus sequence are also cleaved.. The enzyme catalyses Hydrolyzes a Gly-|-Gly bond at its own C-terminus, commonly in the sequence -Tyr-Xaa-Val-Gly-|-Gly, in the processing of the potyviral polyprotein.. Required for aphid transmission and also has proteolytic activity. Only cleaves a Gly-Gly dipeptide at its own C-terminus. Interacts with virions and aphid stylets. Acts as a suppressor of RNA-mediated gene silencing, also known as post-transcriptional gene silencing (PTGS), a mechanism of plant viral defense that limits the accumulation of viral RNAs. May have RNA-binding activity. Its function is as follows. Has helicase activity. It may be involved in replication. In terms of biological role, indispensable for virus replication. Reduces the abundance of host transcripts related to jasmonic acid biosynthesis therefore altering the host defenses. In order to increase its own stability, decreases host protein degradation pathways. Functionally, indispensable for virus replication. Mediates the cap-independent, EIF4E-dependent translation of viral genomic RNAs. Binds to the cap-binding site of host EIF4E and thus interferes with the host EIF4E-dependent mRNA export and translation. VPg-RNA directly binds EIF4E and is a template for transcription. Also forms trimeric complexes with EIF4E-EIF4G, which are templates for translation. Its function is as follows. Has RNA-binding and proteolytic activities. In terms of biological role, an RNA-dependent RNA polymerase that plays an essential role in the virus replication. Functionally, involved in aphid transmission, cell-to-cell and systemis movement, encapsidation of the viral RNA and in the regulation of viral RNA amplification. This Capsicum annuum (Capsicum pepper) protein is Genome polyprotein.